The following is a 304-amino-acid chain: Acetylglutamate kinase (304 aa).

Substrate contacts are provided by residues 77–78, R99, and N193; that span reads GG.

The protein belongs to the acetylglutamate kinase family. ArgB subfamily.

The protein localises to the cytoplasm. The catalysed reaction is N-acetyl-L-glutamate + ATP = N-acetyl-L-glutamyl 5-phosphate + ADP. It functions in the pathway amino-acid biosynthesis; L-arginine biosynthesis; N(2)-acetyl-L-ornithine from L-glutamate: step 2/4. Functionally, catalyzes the ATP-dependent phosphorylation of N-acetyl-L-glutamate. The protein is Acetylglutamate kinase of Pelodictyon phaeoclathratiforme (strain DSM 5477 / BU-1).